Reading from the N-terminus, the 409-residue chain is Putative competence-damage inducible protein (409 aa).

It belongs to the CinA family.

The chain is Putative competence-damage inducible protein from Clostridium botulinum (strain Loch Maree / Type A3).